Reading from the N-terminus, the 128-residue chain is Leucine-rich single-pass membrane protein 1 (128 aa).

Ser-24 bears the Phosphoserine mark. Residues 66–86 (GLLLVLTVSLALVFFAIFLII) traverse the membrane as a helical segment. Positions 90 to 111 (NQMEDVSRRLTAEGKDIDDLKK) form a coiled coil.

It is found in the membrane. The sequence is that of Leucine-rich single-pass membrane protein 1 (Lsmem1) from Mus musculus (Mouse).